The following is a 260-amino-acid chain: Indole-3-glycerol phosphate synthase (260 aa).

Belongs to the TrpC family.

It carries out the reaction 1-(2-carboxyphenylamino)-1-deoxy-D-ribulose 5-phosphate + H(+) = (1S,2R)-1-C-(indol-3-yl)glycerol 3-phosphate + CO2 + H2O. Its pathway is amino-acid biosynthesis; L-tryptophan biosynthesis; L-tryptophan from chorismate: step 4/5. In Staphylococcus aureus (strain COL), this protein is Indole-3-glycerol phosphate synthase.